Reading from the N-terminus, the 476-residue chain is Glycogen synthase (476 aa).

An ADP-alpha-D-glucose-binding site is contributed by Lys15.

It belongs to the glycosyltransferase 1 family. Bacterial/plant glycogen synthase subfamily.

The catalysed reaction is [(1-&gt;4)-alpha-D-glucosyl](n) + ADP-alpha-D-glucose = [(1-&gt;4)-alpha-D-glucosyl](n+1) + ADP + H(+). Its pathway is glycan biosynthesis; glycogen biosynthesis. In terms of biological role, synthesizes alpha-1,4-glucan chains using ADP-glucose. This Streptococcus equi subsp. equi (strain 4047) protein is Glycogen synthase.